A 666-amino-acid polypeptide reads, in one-letter code: LEAF RUST 10 DISEASE-RESISTANCE LOCUS RECEPTOR-LIKE PROTEIN KINASE-like 2.5 (666 aa).

Residues 1 to 30 (MINFSLSLTKSMSYSFIWMLFVIHISCVLS) form the signal peptide. Over 31–275 (ADGNHILCSP…PTRNKVILKL (245 aa)) the chain is Extracellular. N-linked (GlcNAc...) asparagine glycosylation is found at N119, N141, N171, and N198. The helical transmembrane segment at 276-296 (FFIVIYVLGIGAASFAMMGVI) threads the bilayer. Topologically, residues 297–666 (LVVTCLNCLI…YTEICSINVA (370 aa)) are cytoplasmic. Residues 348-636 (KSFAEVIGKG…ALEVPPRPVL (289 aa)) form the Protein kinase domain. ATP is bound by residues 354 to 362 (IGKGGFGTV) and K376. Phosphotyrosine is present on Y420. D471 acts as the Proton acceptor in catalysis. 2 positions are modified to phosphothreonine: T508 and T511.

It belongs to the protein kinase superfamily. Ser/Thr protein kinase family.

It localises to the membrane. The catalysed reaction is L-seryl-[protein] + ATP = O-phospho-L-seryl-[protein] + ADP + H(+). It carries out the reaction L-threonyl-[protein] + ATP = O-phospho-L-threonyl-[protein] + ADP + H(+). The chain is LEAF RUST 10 DISEASE-RESISTANCE LOCUS RECEPTOR-LIKE PROTEIN KINASE-like 2.5 from Arabidopsis thaliana (Mouse-ear cress).